The following is a 72-amino-acid chain: Cytochrome b-c1 complex subunit 9 (72 aa).

Topologically, residues 1–27 (MESAARRSGGGVLEGFYRLVMRRTPVY) are mitochondrial matrix. Residues 28-53 (VTFVIAGALLGERAVDYGVKTLWEKN) form a helical membrane-spanning segment. Residues 54 to 72 (NVGKRYEDISVLGQRPVDE) are Mitochondrial intermembrane-facing.

This sequence belongs to the UQCR10/QCR9 family. In terms of assembly, component of the ubiquinol-cytochrome c oxidoreductase (cytochrome b-c1 complex, complex III, CIII), a multisubunit enzyme composed of 3 respiratory subunits cytochrome b, cytochrome c1 and Rieske protein, 2 core protein subunits, and additional low-molecular weight protein subunits. The complex exists as an obligatory dimer and forms supercomplexes (SCs) in the inner mitochondrial membrane with cytochrome c oxidase (complex IV, CIV).

The protein resides in the mitochondrion inner membrane. Its function is as follows. Component of the ubiquinol-cytochrome c oxidoreductase, a multisubunit transmembrane complex that is part of the mitochondrial electron transport chain which drives oxidative phosphorylation. The respiratory chain contains 3 multisubunit complexes succinate dehydrogenase (complex II, CII), ubiquinol-cytochrome c oxidoreductase (cytochrome b-c1 complex, complex III, CIII) and cytochrome c oxidase (complex IV, CIV), that cooperate to transfer electrons derived from NADH and succinate to molecular oxygen, creating an electrochemical gradient over the inner membrane that drives transmembrane transport and the ATP synthase. The cytochrome b-c1 complex catalyzes electron transfer from ubiquinol to cytochrome c, linking this redox reaction to translocation of protons across the mitochondrial inner membrane, with protons being carried across the membrane as hydrogens on the quinol. In the process called Q cycle, 2 protons are consumed from the matrix, 4 protons are released into the intermembrane space and 2 electrons are passed to cytochrome c. The sequence is that of Cytochrome b-c1 complex subunit 9 from Solanum tuberosum (Potato).